Here is a 541-residue protein sequence, read N- to C-terminus: Tyrosine-protein phosphatase non-receptor type 5 (541 aa).

The tract at residues Met1 to Ser55 is disordered. Over residues Met32–Glu43 the composition is skewed to pro residues. Helical transmembrane passes span Leu64–His84 and Leu122–Leu142. Ser221 is subject to Phosphoserine; by PKA. The residue at position 231 (Thr231) is a Phosphothreonine; by MAPK. Ser244 is subject to Phosphoserine; by MAPK. In terms of domain architecture, Tyrosine-protein phosphatase spans Leu276–Tyr531. Substrate-binding positions include Asp437, Cys472 to Arg478, and Gln516. Catalysis depends on Cys472, which acts as the Phosphocysteine intermediate.

Belongs to the protein-tyrosine phosphatase family. Non-receptor class subfamily. Phosphorylation at Ser-221 by PKA deactivates PTPN5. Phosphorylation at Thr-231 and Ser-244 by MAPKs stabilizes the phosphatase, dephosphorylation of these sites results in ubiquitin-mediated degradation of the active phosphatase. In terms of tissue distribution, STEP20 is expressed only in the CNS.

The protein localises to the endoplasmic reticulum membrane. It is found in the cytoplasm. The enzyme catalyses O-phospho-L-tyrosyl-[protein] + H2O = L-tyrosyl-[protein] + phosphate. Its function is as follows. May regulate the activity of several effector molecules involved in synaptic plasticity and neuronal cell survival, including MAPKs, Src family kinases and NMDA receptors. The sequence is that of Tyrosine-protein phosphatase non-receptor type 5 (Ptpn5) from Mus musculus (Mouse).